Reading from the N-terminus, the 297-residue chain is Ribosomal protein L11 methyltransferase (297 aa).

S-adenosyl-L-methionine contacts are provided by T150, G171, D193, and N233.

It belongs to the methyltransferase superfamily. PrmA family.

It is found in the cytoplasm. It catalyses the reaction L-lysyl-[protein] + 3 S-adenosyl-L-methionine = N(6),N(6),N(6)-trimethyl-L-lysyl-[protein] + 3 S-adenosyl-L-homocysteine + 3 H(+). Methylates ribosomal protein L11. The chain is Ribosomal protein L11 methyltransferase from Laribacter hongkongensis (strain HLHK9).